Consider the following 70-residue polypeptide: Small ribosomal subunit protein bS21A (70 aa).

The protein belongs to the bacterial ribosomal protein bS21 family.

The polypeptide is Small ribosomal subunit protein bS21A (Burkholderia orbicola (strain AU 1054)).